Consider the following 252-residue polypeptide: Ubiquinone biosynthesis protein COQ4 homolog 1, mitochondrial (252 aa).

Residues histidine 130, aspartate 131, histidine 134, and glutamate 146 each coordinate Zn(2+).

The protein belongs to the COQ4 family. Component of a multi-subunit COQ enzyme complex. It depends on Zn(2+) as a cofactor.

Its subcellular location is the mitochondrion inner membrane. The enzyme catalyses a 4-hydroxy-3-methoxy-5-(all-trans-polyprenyl)benzoate + H(+) = a 2-methoxy-6-(all-trans-polyprenyl)phenol + CO2. It participates in cofactor biosynthesis; ubiquinone biosynthesis. In terms of biological role, lyase that catalyzes the C1-decarboxylation of 4-hydroxy-3-methoxy-5-(all-trans-polyprenyl)benzoic acid into 2-methoxy-6-(all-trans-polyprenyl)phenol during ubiquinone biosynthesis. The sequence is that of Ubiquinone biosynthesis protein COQ4 homolog 1, mitochondrial from Trypanosoma cruzi (strain CL Brener).